The chain runs to 270 residues: MSEIILTPKEQPEVPLEAPNIKPDVFAGKSIDEIRNIQIMHGNEVVKLGDFFEVSGEPADSAADIKIIIDGDVYNTKRIGQDMTAGEILVKGNVNMYVGAGMKGGKITVEGNAKSWAGQDMRGGELEIFGDAGDYVGSSYRGDWRGMSGGVITVHGNAGNEIGEYMNGGKIIIKGDVNIMPGIHMNNGLIIIEGNAVARVGGEMAGGTIVVKGMIEEFLPGFKYLGVEKDIEVNGETFPGAYYKFEGDHAIKGAKGMVYAAVGCNGHIEP.

7 repeat units span residues 80 to 92 (GQDMTAGEILVKG), 99 to 111 (GAGMKGGKITVEG), 118 to 130 (GQDMRGGELEIFG), 144 to 156 (WRGMSGGVITVHG), 163 to 175 (GEYMNGGKIIIKG), 182 to 194 (GIHMNNGLIIIEG), and 201 to 213 (GGEMAGGTIVVKG). The 7 X 13 AA repeats of [GW]-X-X-M-X-X-G-X-[IL]-X-[IV]-X-G stretch occupies residues 80–213 (GQDMTAGEIL…MAGGTIVVKG (134 aa)).

Belongs to the FwdC/FmdC family. In terms of assembly, this enzyme is composed of seven subunits FwdA (65 kDa), FwdB (53 kDa), FwdC (31 kDa), FwdD (15 kDa), FwdE, FwdF and FwdG.

The catalysed reaction is N-formylmethanofuran + 2 oxidized [2Fe-2S]-[ferredoxin] + H2O = methanofuran + 2 reduced [2Fe-2S]-[ferredoxin] + CO2 + H(+). It functions in the pathway one-carbon metabolism; methanogenesis from CO(2); 5,10-methenyl-5,6,7,8-tetrahydromethanopterin from CO(2): step 1/3. Its activity is regulated as follows. Not inactivated by cyanide. Catalyzes the reversible oxidation of CO(2) and methanofuran (MFR) to N-formylmethanofuran (CHO-MFR). Can only oxidize formylmethanofuran. This enzyme is oxygen-labile. This Methanothermobacter thermautotrophicus (strain ATCC 29096 / DSM 1053 / JCM 10044 / NBRC 100330 / Delta H) (Methanobacterium thermoautotrophicum) protein is Tungsten-containing formylmethanofuran dehydrogenase 2 subunit C (fwdC).